The following is a 71-amino-acid chain: ALTELRCQCLQTVQGIHLKNIQNLKVLSPGPHCAQTEVIATLKSGQEACRNPAAPMVKKFLQKRLSNGNSS.

Cystine bridges form between Cys-7/Cys-33 and Cys-9/Cys-49.

Belongs to the intercrine alpha (chemokine CxC) family. In terms of assembly, homodimer.

Its subcellular location is the secreted. Has chemotactic activity for neutrophils. This Oryctolagus cuniculus (Rabbit) protein is Permeability factor 2.